Here is a 149-residue protein sequence, read N- to C-terminus: Nucleoside diphosphate kinase (149 aa).

The ATP site is built by Lys-9, Phe-57, Arg-85, Thr-91, Arg-102, and Asn-112. His-115 serves as the catalytic Pros-phosphohistidine intermediate.

It belongs to the NDK family. As to quaternary structure, homotetramer. It depends on Mg(2+) as a cofactor.

It localises to the cytoplasm. The catalysed reaction is a 2'-deoxyribonucleoside 5'-diphosphate + ATP = a 2'-deoxyribonucleoside 5'-triphosphate + ADP. The enzyme catalyses a ribonucleoside 5'-diphosphate + ATP = a ribonucleoside 5'-triphosphate + ADP. Its function is as follows. Major role in the synthesis of nucleoside triphosphates other than ATP. The ATP gamma phosphate is transferred to the NDP beta phosphate via a ping-pong mechanism, using a phosphorylated active-site intermediate. The chain is Nucleoside diphosphate kinase from Staphylococcus epidermidis (strain ATCC 35984 / DSM 28319 / BCRC 17069 / CCUG 31568 / BM 3577 / RP62A).